The primary structure comprises 251 residues: MSHSQEKIALITGASSQGDIGTAICRKLASQGIHIFFTHWNSDTAWIEEFQQEILRMGVRCEAMKIDLSDAHAAFTIHEKISDKLGYPSILINNAAHSASDNYVSLDAKSLDEHYAVNMRSNFLLCVEFARRFKKSNLISGRIINMTSGQDLGPLPGELAYAATKGAISAFTRSLSQELAPLGITVNAVNPGPTDSTWMTDEIRNFLSPKFPMGRIGTPDDAARMIAFLASDEAEWITGQIIHSEGGFIRG.

Position 12 to 21 (12 to 21) interacts with NADP(+); that stretch reads TGASSQGDIG. Substrate is bound at residue serine 148. Tyrosine 161 serves as the catalytic Proton acceptor.

This sequence belongs to the short-chain dehydrogenases/reductases (SDR) family.

This is an uncharacterized protein from Bacillus subtilis (strain 168).